The sequence spans 338 residues: tRNA N6-adenosine threonylcarbamoyltransferase (338 aa).

2 residues coordinate Fe cation: histidine 114 and histidine 118. Substrate contacts are provided by residues 136–140, aspartate 169, glycine 182, aspartate 186, and asparagine 275; that span reads LVSGG. Fe cation is bound at residue aspartate 301.

The protein belongs to the KAE1 / TsaD family. It depends on Fe(2+) as a cofactor.

Its subcellular location is the cytoplasm. It carries out the reaction L-threonylcarbamoyladenylate + adenosine(37) in tRNA = N(6)-L-threonylcarbamoyladenosine(37) in tRNA + AMP + H(+). Required for the formation of a threonylcarbamoyl group on adenosine at position 37 (t(6)A37) in tRNAs that read codons beginning with adenine. Is involved in the transfer of the threonylcarbamoyl moiety of threonylcarbamoyl-AMP (TC-AMP) to the N6 group of A37, together with TsaE and TsaB. TsaD likely plays a direct catalytic role in this reaction. In Streptococcus equi subsp. equi (strain 4047), this protein is tRNA N6-adenosine threonylcarbamoyltransferase.